Consider the following 865-residue polypeptide: Carbohydrate-responsive element-binding protein (865 aa).

2 disordered regions span residues 15–41 (PRVV…AGGL) and 53–77 (MVSS…LADF). 3 positions are modified to phosphoserine: serine 20, serine 23, and serine 25. A Phosphothreonine modification is found at threonine 27. The residue at position 196 (serine 196) is a Phosphoserine. Disordered stretches follow at residues 334–392 (GILG…TKMP) and 500–653 (QPRC…LSRG). Polar residues predominate over residues 351–368 (GMTPLSGNTRLQARNSCS). Low complexity predominate over residues 515–533 (ASPPTLTSATASPTATATA). A Phosphoserine; by AMPK modification is found at serine 568. The span at 583–597 (PPIPAPTPPRPPPGP) shows a compositional bias: pro residues. Phosphoserine is present on residues serine 615, serine 627, and serine 644. Residues 662–716 (NRRITHISAEQKRRFNIKLGFDTLHGLVSTLSAQPSLKVSKATTLQKTAEYILML) form the bHLH domain. A leucine-zipper region spans residues 716 to 737 (LQQERAAMQEEAQQLRDEIEEL).

As to quaternary structure, binds DNA as a heterodimer with TCFL4/MLX. Post-translationally, phosphorylation at Ser-568 by AMPK inactivates the DNA-binding activity.

It localises to the nucleus. Functionally, transcriptional repressor. Binds to the canonical and non-canonical E box sequences 5'-CACGTG-3'. The chain is Carbohydrate-responsive element-binding protein (Mlxipl) from Rattus norvegicus (Rat).